The primary structure comprises 101 residues: YcgL domain-containing protein ABBFA_001807 (101 aa).

Positions 1–92 constitute a YcgL domain; sequence MHCDIYRSSK…PPEGLINPNA (92 aa).

This Acinetobacter baumannii (strain AB307-0294) protein is YcgL domain-containing protein ABBFA_001807.